The following is a 688-amino-acid chain: Homoaconitase, mitochondrial (688 aa).

3 residues coordinate [4Fe-4S] cluster: Cys-335, Cys-395, and Cys-398. The tract at residues 468 to 494 (SIDLPKSSGNTGATSEEPISEDDTSEA) is disordered.

Belongs to the aconitase/IPM isomerase family. Requires [4Fe-4S] cluster as cofactor.

Its subcellular location is the mitochondrion. The enzyme catalyses (2R,3S)-homoisocitrate = cis-homoaconitate + H2O. Its pathway is amino-acid biosynthesis; L-lysine biosynthesis via AAA pathway; L-alpha-aminoadipate from 2-oxoglutarate: step 3/5. In terms of biological role, catalyzes the reversible hydration of cis-homoaconitate to (2R,3S)-homoisocitrate, a step in the alpha-aminoadipate pathway for lysine biosynthesis. The chain is Homoaconitase, mitochondrial (LYS4) from Candida parapsilosis (Yeast).